The primary structure comprises 253 residues: Chloride intracellular channel protein 4 (253 aa).

The residue at position 2 (Ala-2) is an N-acetylalanine. The interval 2–101 (ALSMPLNGLK…EEFLEEVLCP (100 aa)) is required for insertion into the membrane. Ser-4 is subject to Phosphoserine. N6-acetyllysine is present on Lys-24. The G-site signature appears at 35–38 (CPFS). Residues 37 to 57 (FSQRLFMILWLKGVVFSVTTV) traverse the membrane as a helical segment. The GST C-terminal domain occupies 81–244 (NSEVKTDVNK…PSDKEVEIAY (164 aa)). Lys-130 bears the N6-acetyllysine mark. Residues Ser-132, Ser-167, and Ser-236 each carry the phosphoserine modification. Residue Tyr-244 is modified to Phosphotyrosine.

Belongs to the chloride channel CLIC family. Monomer. Interacts with HRH3. As to expression, detected in brain, in cell bodies and dendrites of Purkinje cells in cerebellar neurons (at protein level). Expressed neonatal and adult cardiomyocytes (at protein level). Marked expression was found in hippocampus and cerebellum, and in many other tissues.

The protein resides in the cytoplasm. Its subcellular location is the cytoskeleton. It localises to the microtubule organizing center. It is found in the centrosome. The protein localises to the cytoplasmic vesicle membrane. The protein resides in the nucleus. Its subcellular location is the cell membrane. It localises to the mitochondrion. It is found in the cell junction. The protein localises to the endoplasmic reticulum membrane. The enzyme catalyses chloride(in) = chloride(out). The catalysed reaction is thiocyanate(in) = thiocyanate(out). It carries out the reaction nitrate(in) = nitrate(out). It catalyses the reaction iodide(out) = iodide(in). The enzyme catalyses bromide(in) = bromide(out). The catalysed reaction is fluoride(in) = fluoride(out). It carries out the reaction choline(out) = choline(in). With respect to regulation, channel activity is redox- and pH-regulated. Anion vs cation selectivity is enhanced when fully oxidized. Its function is as follows. In the soluble state, catalyzes glutaredoxin-like thiol disulfide exchange reactions with reduced glutathione as electron donor. Can insert into membranes and form voltage-dependent multi-ion conductive channels. Membrane insertion seems to be redox-regulated and may occur only under oxidizing conditions. Has alternate cellular functions like a potential role in angiogenesis or in maintaining apical-basolateral membrane polarity during mitosis and cytokinesis. Could also promote endothelial cell proliferation and regulate endothelial morphogenesis (tubulogenesis). Promotes cell-surface expression of HRH3. The sequence is that of Chloride intracellular channel protein 4 (Clic4) from Rattus norvegicus (Rat).